Here is a 390-residue protein sequence, read N- to C-terminus: Neutrophil cytosol factor 1 (390 aa).

The PX domain maps to Thr-4–Leu-125. SH3 domains follow at residues Ile-156–Ser-215 and Tyr-226–Gln-285. Positions Gln-285–Val-390 are disordered. Ser-303 and Ser-304 each carry phosphoserine. A compositionally biased stretch (basic residues) spans His-309–Arg-318. Phosphoserine occurs at positions 320, 328, 345, and 348.

As to quaternary structure, component of the phagocyte NADPH oxidase complex composed of an obligatory core heterodimer formed by the membrane proteins CYBA and CYBB and the cytosolic regulatory subunits NCF1/p47-phox, NCF2/p67-phox, NCF4/p40-phox and the small GTPase RAC1 or RAC2. Part of a cytosolic complex composed at least by NCF1, NCF2 and NCF4. Interacts (via C-terminus) with NCF2 (via the C-terminal SH3 domain). Interacts with NCF4. Interacts with CYBB. Interacts (via the second SH3 domain) with CYBA; interaction is phosphorylation-dependent. Interacts with NOXA1. Interacts with ADAM15. Interacts with TRAF4. Interacts with FASLG. Interacts with PARK7 (via C-terminus); the interaction is enhanced by LPS and modulates NCF1 phosphorylation and membrane translocation. In terms of processing, phosphorylated by PRKCD; phosphorylation induces activation of NCF1, leading to assembly and activation of the NADPH oxidase complex. In terms of tissue distribution, detected in peripheral blood monocytes and neutrophils (at protein level).

The protein localises to the cytoplasm. It is found in the cytosol. Its subcellular location is the membrane. In terms of biological role, subunit of the phagocyte NADPH oxidase complex that mediates the transfer of electrons from cytosolic NADPH to O2 to produce the superoxide anion (O2(-)). In the activated complex, electrons are first transferred from NADPH to flavin adenine dinucleotide (FAD) and subsequently transferred via two heme molecules to molecular oxygen, producing superoxide through an outer-sphere reaction. Activation of the NADPH oxidase complex is initiated by the assembly of cytosolic subunits of the NADPH oxidase complex with the core NADPH oxidase complex to form a complex at the plasma membrane or phagosomal membrane. This activation process is initiated by phosphorylation dependent binding of the cytosolic NCF1/p47-phox subunit to the C-terminus of CYBA/p22-phox. This is Neutrophil cytosol factor 1 from Homo sapiens (Human).